The following is a 161-amino-acid chain: Cyclic pyranopterin monophosphate synthase (161 aa).

Residues Met-75–His-77 and Met-115–Glu-116 each bind substrate. Asp-130 is an active-site residue.

This sequence belongs to the MoaC family. As to quaternary structure, homohexamer; trimer of dimers.

The catalysed reaction is (8S)-3',8-cyclo-7,8-dihydroguanosine 5'-triphosphate = cyclic pyranopterin phosphate + diphosphate. It functions in the pathway cofactor biosynthesis; molybdopterin biosynthesis. Its function is as follows. Catalyzes the conversion of (8S)-3',8-cyclo-7,8-dihydroguanosine 5'-triphosphate to cyclic pyranopterin monophosphate (cPMP). This Bacillus cereus (strain G9842) protein is Cyclic pyranopterin monophosphate synthase.